The primary structure comprises 175 residues: uncharacterized protein (175 aa).

Over residues 1–14 (MNTSSRIQLPSSND) the composition is skewed to polar residues. Disordered regions lie at residues 1-31 (MNTSSRIQLPSSNDAHVYDGRSNEPKASKRS) and 127-175 (ARSR…QSKR). The span at 16–27 (HVYDGRSNEPKA) shows a compositional bias: basic and acidic residues. A compositionally biased stretch (low complexity) spans 130 to 149 (RASSVSNSRLNSRTNSSVSL). A compositionally biased stretch (polar residues) spans 154–175 (GSSSWKNKIKNAVSNVTDQSKR).

The protein localises to the cytoplasm. It localises to the nucleus. This is an uncharacterized protein from Schizosaccharomyces pombe (strain 972 / ATCC 24843) (Fission yeast).